We begin with the raw amino-acid sequence, 304 residues long: Murein tetrapeptide carboxypeptidase (304 aa).

Ser-106 serves as the catalytic Nucleophile. Catalysis depends on charge relay system residues Glu-200 and His-270.

The protein belongs to the peptidase S66 family.

It is found in the cytoplasm. It carries out the reaction N-acetyl-D-glucosaminyl-N-acetylmuramoyl-L-alanyl-meso-2,6-diaminoheptanedioyl-D-alanine + H2O = N-acetyl-D-glucosaminyl-N-acetylmuramoyl-L-alanyl-meso-2,6-diaminoheptanedioate + D-alanine. It functions in the pathway cell wall biogenesis; peptidoglycan recycling. Functionally, releases the terminal D-alanine residue from the cytoplasmic tetrapeptide recycling product L-Ala-gamma-D-Glu-meso-Dap-D-Ala. Can also cleave D-Ala from murein derivatives containing the tetrapeptide, i.e. MurNAc-tetrapeptide, UDP-MurNAc-tetrapeptide, GlcNAc-MurNAc-tetrapeptide, and GlcNAc-anhMurNAc-tetrapeptide. Does not act on murein sacculi or cross-linked muropeptides. The tripeptides produced by the LcdA reaction can then be reused as peptidoglycan building blocks; LcdA is thereby involved in murein recycling. The sequence is that of Murein tetrapeptide carboxypeptidase (ldcA) from Escherichia coli O6:H1 (strain CFT073 / ATCC 700928 / UPEC).